The chain runs to 20 residues: Cytochrome c oxidase subunit 8B, mitochondrial (20 aa).

The protein belongs to the cytochrome c oxidase VIII family. In terms of assembly, component of the cytochrome c oxidase (complex IV, CIV), a multisubunit enzyme composed of 14 subunits. The complex is composed of a catalytic core of 3 subunits MT-CO1, MT-CO2 and MT-CO3, encoded in the mitochondrial DNA, and 11 supernumerary subunits COX4I, COX5A, COX5B, COX6A, COX6B, COX6C, COX7A, COX7B, COX7C, COX8 and NDUFA4, which are encoded in the nuclear genome. The complex exists as a monomer or a dimer and forms supercomplexes (SCs) in the inner mitochondrial membrane with NADH-ubiquinone oxidoreductase (complex I, CI) and ubiquinol-cytochrome c oxidoreductase (cytochrome b-c1 complex, complex III, CIII), resulting in different assemblies (supercomplex SCI(1)III(2)IV(1) and megacomplex MCI(2)III(2)IV(2)).

The protein localises to the mitochondrion inner membrane. It participates in energy metabolism; oxidative phosphorylation. Component of the cytochrome c oxidase, the last enzyme in the mitochondrial electron transport chain which drives oxidative phosphorylation. The respiratory chain contains 3 multisubunit complexes succinate dehydrogenase (complex II, CII), ubiquinol-cytochrome c oxidoreductase (cytochrome b-c1 complex, complex III, CIII) and cytochrome c oxidase (complex IV, CIV), that cooperate to transfer electrons derived from NADH and succinate to molecular oxygen, creating an electrochemical gradient over the inner membrane that drives transmembrane transport and the ATP synthase. Cytochrome c oxidase is the component of the respiratory chain that catalyzes the reduction of oxygen to water. Electrons originating from reduced cytochrome c in the intermembrane space (IMS) are transferred via the dinuclear copper A center (CU(A)) of subunit 2 and heme A of subunit 1 to the active site in subunit 1, a binuclear center (BNC) formed by heme A3 and copper B (CU(B)). The BNC reduces molecular oxygen to 2 water molecules using 4 electrons from cytochrome c in the IMS and 4 protons from the mitochondrial matrix. This is Cytochrome c oxidase subunit 8B, mitochondrial from Thunnus obesus (Bigeye tuna).